The following is a 147-amino-acid chain: Allograft inflammatory factor 1 (147 aa).

Ser-2 is modified (N-acetylserine). Lys-11 carries the N6-acetyllysine modification. Ser-39 carries the post-translational modification Phosphoserine. In terms of domain architecture, EF-hand 1 spans 45–80 (SKLEAFKKKYMEFDLNEDGGIDIMSLKRMMEKLGVP). Asp-58, Asn-60, and Asp-62 together coordinate Ca(2+). The EF-hand 2; degenerate domain maps to 81–115 (KTHLELKKLIMEVSSGPGETFSYSDFLKMMLGKRS). The interval 128 to 147 (AREQEKPTGLPAKKAISELP) is disordered.

Post-translationally, phosphorylated on serine residues.

It is found in the cytoplasm. It localises to the cytoskeleton. The protein resides in the cell projection. Its subcellular location is the ruffle membrane. The protein localises to the phagocytic cup. Its function is as follows. May play a role in macrophage activation and function. The polypeptide is Allograft inflammatory factor 1 (AIF1) (Bos taurus (Bovine)).